The sequence spans 260 residues: Myb transcription factor 42 (260 aa).

2 consecutive HTH myb-type domains span residues 9–61 and 62–116; these read KAHT…INYL and RPDL…RRKL. 2 consecutive DNA-binding regions (H-T-H motif) follow at residues 37-61 and 89-112; these read WRSL…INYL and WSLI…NTHI.

As to expression, mainly expressed in the aerial parts and, to a lower extent, in roots.

It is found in the nucleus. Its function is as follows. Transcription factor that negatively regulates the expression of caffeic acid O-methyl-transferase genes (COMTs) and of other genes involved in the biosynthesis of lignin, thus preventing lignification. The chain is Myb transcription factor 42 from Zea mays (Maize).